Consider the following 96-residue polypeptide: Complement inhibitor RaCI4 (96 aa).

Residues 1-24 form the signal peptide; it reads MSAFNIFALVVVVCALMINECCTS. 3 disulfide bridges follow: Cys37-Cys61, Cys42-Cys63, and Cys57-Cys78.

The protein belongs to the RaCI family. As to expression, expressed in salivary glands.

The protein localises to the secreted. Complement inhibitor. Prevents complement-mediated C5 activation by binding to C5. Binds C5 at a different binding site than the other tick complement inhibitors OmCI and CirpT1, and the drug eculizumab. Inhibits complement in human and guinea pig but not in other species tested (rabbit, rat, mouse, and pig). The protein is Complement inhibitor RaCI4 of Hyalomma rufipes (Tick).